The chain runs to 211 residues: Probable GTP-binding protein EngB (211 aa).

Positions 30–204 (EGFEVAFAGR…YTVLAGWMEL (175 aa)) constitute an EngB-type G domain. Residues 38 to 45 (GRSNAGKS), 64 to 68 (GRTQL), 82 to 85 (DLPG), 149 to 152 (TKAD), and 182 to 185 (LFSA) each bind GTP. Positions 45 and 66 each coordinate Mg(2+).

Belongs to the TRAFAC class TrmE-Era-EngA-EngB-Septin-like GTPase superfamily. EngB GTPase family. Mg(2+) is required as a cofactor.

Necessary for normal cell division and for the maintenance of normal septation. The chain is Probable GTP-binding protein EngB from Pseudomonas syringae pv. tomato (strain ATCC BAA-871 / DC3000).